A 196-amino-acid polypeptide reads, in one-letter code: Rho-related GTP-binding protein RhoB (196 aa).

Glycine 12 to threonine 19 contributes to the GTP binding site. A glycan (O-linked (GlcNAc) tyrosine; by Photorhabdus PAU_02230) is linked at tyrosine 34. The Effector region signature appears at tyrosine 34–tyrosine 42. Threonine 37 carries a (Microbial infection) O-linked (Glc) threonine; by C.difficile toxins TcdA and TcdB glycan. Position 41 is an ADP-ribosylasparagine; by botulinum toxin (asparagine 41). Residues aspartate 59–glutamine 63 and asparagine 117–aspartate 120 each bind GTP. Phosphotyrosine is present on tyrosine 154. Residues cysteine 189 and cysteine 192 are each lipidated (S-palmitoyl cysteine). Cysteine 193 is subject to Cysteine methyl ester. Cysteine 193 carries S-farnesyl cysteine; in plasma membrane form lipidation. Residue cysteine 193 is the site of S-geranylgeranyl cysteine; in endosomal form attachment. A propeptide spans lysine 194 to leucine 196 (removed in mature form).

This sequence belongs to the small GTPase superfamily. Rho family. In terms of assembly, binds ROCK1 and ROCK2. Also binds PKN1/PRK1. Interacts with ARGGEF3. Interacts with RTKN. Interacts with AKAP13. Interacts with RIPOR1. Post-translationally, prenylation specifies the subcellular location of RHOB. The farnesylated form is localized to the plasma membrane while the geranylgeranylated form is localized to the endosome. (Microbial infection) Glycosylated at Tyr-34 by Photorhabdus asymbiotica toxin PAU_02230. Mono-O-GlcNAcylation by PAU_02230 inhibits downstream signaling by an impaired interaction with diverse regulator and effector proteins of Rho and leads to actin disassembly. In terms of processing, (Microbial infection) Glucosylated at Thr-37 by C.difficile toxins TcdA and TcdB in the colonic epithelium. Monoglucosylation completely prevents the recognition of the downstream effector, blocking the GTPases in their inactive form, leading to actin cytoskeleton disruption.

It localises to the late endosome membrane. The protein resides in the cell membrane. Its subcellular location is the nucleus. It is found in the cleavage furrow. Functionally, mediates apoptosis in neoplastically transformed cells after DNA damage. Not essential for development but affects cell adhesion and growth factor signaling in transformed cells. Plays a negative role in tumorigenesis as deletion causes tumor formation. Involved in intracellular protein trafficking of a number of proteins. Targets PKN1 to endosomes and is involved in trafficking of the EGF receptor from late endosomes to lysosomes. Also required for stability and nuclear trafficking of AKT1/AKT which promotes endothelial cell survival during vascular development. Serves as a microtubule-dependent signal that is required for the myosin contractile ring formation during cell cycle cytokinesis. Required for genotoxic stress-induced cell death in breast cancer cells. This Homo sapiens (Human) protein is Rho-related GTP-binding protein RhoB (RHOB).